A 542-amino-acid chain; its full sequence is 4-coumarate--CoA ligase-like 5 (542 aa).

The ATP site is built by S204, S205, G206, T207, T208, and K212. (E)-4-coumaroyl-AMP is bound at residue F262. CoA is bound at residue R282. Residues D284–Q353 form an SBD1 region. 4 residues coordinate (E)-4-coumaroyl-AMP: G331, Q353, G354, and T358. Q353, G354, T358, D418, and R433 together coordinate ATP. An SBD2 region spans residues G354–Y397. 2 residues coordinate (E)-4-coumaroyl-AMP: K435 and K439. Residues K441 and G442 each contribute to the CoA site. An ATP-binding site is contributed by K524.

It belongs to the ATP-dependent AMP-binding enzyme family. Requires Mg(2+) as cofactor.

The catalysed reaction is (E)-4-coumarate + ATP + CoA = (E)-4-coumaroyl-CoA + AMP + diphosphate. It catalyses the reaction (E)-4-coumarate + ATP + H(+) = (E)-4-coumaroyl-AMP + diphosphate. The enzyme catalyses (E)-4-coumaroyl-AMP + CoA = (E)-4-coumaroyl-CoA + AMP + H(+). Its function is as follows. Carboxylate--CoA ligase that may use 4-coumarate as substrate. Follows a two-step reaction mechanism, wherein the carboxylate substrate first undergoes adenylation by ATP, followed by a thioesterification in the presence of CoA to yield the final CoA thioester. In Oryza sativa subsp. japonica (Rice), this protein is 4-coumarate--CoA ligase-like 5 (4CLL5).